A 364-amino-acid polypeptide reads, in one-letter code: MGSLSESHTQYKHGVEVEEDEEESYSRAMQLSMAIVLPMATQSAIQLGVFEIIAKAPGGRLSASEIATILQAQNPKAPVMLDRMLRLLVSHRVLDCSVSGPAGERLYGLTSVSKYFVPDQDGASLGNFMALPLDKVFMESWMGVKGAVMEGGIPFNRVHGMHIFEYASSNSKFSDTYHRAMFNHSTIALKRILEHYKGFENVTKLVDVGGGLGVTLSMIASKYPHIQAINFDLPHVVQDAASYPGVEHVGGNMFESVPEGDAILMKWILHCWDDEQCLRILKNCYKATPENGKVIVMNSVVPETPEVSSSARETSLLDVLLMTRDGGGRERTQKEFTELAIGAGFKGINFACCVCNLHIMEFFK.

Residues 1-20 (MGSLSESHTQYKHGVEVEED) form a disordered region. S-adenosyl-L-methionine-binding residues include Gly209, Asp232, Met253, and Lys266. The Proton acceptor role is filled by His270.

This sequence belongs to the class I-like SAM-binding methyltransferase superfamily. Cation-independent O-methyltransferase family. COMT subfamily. Homodimer. As to expression, expressed in leaves, flowers, stems and roots. Detected in the vascular tissues in stems, in the rhizodermis or the endodermis of roots, in the inside of carpels, in the central vascular bundles of the syncarp ovary and in the secretory oil glands located around the outer ovary wall.

The enzyme catalyses anthranilate + S-adenosyl-L-methionine = N-methylanthranilate + S-adenosyl-L-homocysteine + H(+). Its activity is regulated as follows. Inhibited by Ca(2+), Co(2+), Fe(2+), Fe(3+), Cu(2+) or Zn(2+). No effect of Mg(2+). In terms of biological role, involved in the biosynthesis of acridine alkaloids. N-methyltransferase with a strict substrate specificity for anthranilate. No activity with anthranilic acid methyl ester, anthraniloyl CoA, 3- or 4-amino-benzoic acid, salicylic acid, catechol, eugenol, caffeic acid, quercetin, theobromin, theophyllin, putrescine and nicotinic acid among others. This is Anthranilate N-methyltransferase from Ruta graveolens (Common rue).